Here is a 476-residue protein sequence, read N- to C-terminus: Doublecortin domain-containing protein 2 (476 aa).

Doublecortin domains are found at residues K17–L100 and C139–S221. The tract at residues F234–A476 is disordered. Residues S261–Q272 show a composition bias toward polar residues. S270 bears the Phosphoserine mark. The span at K279–T289 shows a compositional bias: basic and acidic residues. Polar residues predominate over residues K296–N306. Over residues E354 to F366 the composition is skewed to basic and acidic residues. Residues E415 to V426 show a composition bias toward low complexity. The span at D446–V455 shows a compositional bias: basic and acidic residues.

In terms of assembly, interacts with DVL1, DVL2 and DVL3. As to expression, ubiquitously expressed. In brain, highly expressed in the entorhinal cortex, inferior temporal cortex, medial temporal cortex, hypothalamus, amygdala and hippocampus. Expressed in liver by cholangiocytes, the epithelial cells of the bile ducts (at protein level).

The protein resides in the cell projection. It localises to the cilium. Its subcellular location is the cytoplasm. It is found in the cytoskeleton. The protein localises to the cilium axoneme. The protein resides in the kinocilium. Functionally, protein that plays a role in the inhibition of canonical Wnt signaling pathway. May be involved in neuronal migration during development of the cerebral neocortex. Involved in the control of ciliogenesis and ciliary length. In Homo sapiens (Human), this protein is Doublecortin domain-containing protein 2 (DCDC2).